Here is a 545-residue protein sequence, read N- to C-terminus: CTP synthase (545 aa).

Residues 1 to 266 (MTTNYIFVTG…DDYICKRFSL (266 aa)) are amidoligase domain. Residue S14 coordinates CTP. Position 14 (S14) interacts with UTP. Residues 15-20 (SLGKGI) and D72 contribute to the ATP site. Mg(2+) is bound by residues D72 and E140. CTP is bound by residues 147–149 (DIE), 187–192 (KTKPTQ), and K223. Residues 187–192 (KTKPTQ) and K223 each bind UTP. 239–241 (KDV) contributes to the ATP binding site. The 252-residue stretch at 291-542 (TIGMVGKYIE…VKAANEHQKR (252 aa)) folds into the Glutamine amidotransferase type-1 domain. An L-glutamine-binding site is contributed by G352. C379 acts as the Nucleophile; for glutamine hydrolysis in catalysis. Residues 380–383 (LGMQ), E403, and R470 each bind L-glutamine. Catalysis depends on residues H515 and E517.

It belongs to the CTP synthase family. As to quaternary structure, homotetramer.

It catalyses the reaction UTP + L-glutamine + ATP + H2O = CTP + L-glutamate + ADP + phosphate + 2 H(+). The catalysed reaction is L-glutamine + H2O = L-glutamate + NH4(+). The enzyme catalyses UTP + NH4(+) + ATP = CTP + ADP + phosphate + 2 H(+). It participates in pyrimidine metabolism; CTP biosynthesis via de novo pathway; CTP from UDP: step 2/2. With respect to regulation, allosterically activated by GTP, when glutamine is the substrate; GTP has no effect on the reaction when ammonia is the substrate. The allosteric effector GTP functions by stabilizing the protein conformation that binds the tetrahedral intermediate(s) formed during glutamine hydrolysis. Inhibited by the product CTP, via allosteric rather than competitive inhibition. Functionally, catalyzes the ATP-dependent amination of UTP to CTP with either L-glutamine or ammonia as the source of nitrogen. Regulates intracellular CTP levels through interactions with the four ribonucleotide triphosphates. The polypeptide is CTP synthase (Salmonella newport (strain SL254)).